The sequence spans 867 residues: Bifunctional diterpene synthase, chloroplastic (867 aa).

The transit peptide at 1-55 (MAKVLFSSFQQTGISGSLKSGQLSGVFINGTNLKSNAHAKRFRKNSTSSITIRCC) directs the protein to the chloroplast. Position 255 (lysine 255) interacts with substrate. 2 residues coordinate Mg(2+): aspartate 389 and aspartate 391. The DXDD motif motif lies at 389 to 392 (DIDD). Lysine 474 serves as a coordination point for substrate. The Mg(2+) site is built by aspartate 611, aspartate 615, asparagine 758, threonine 762, and glutamate 766. The DDXXD motif motif lies at 611-615 (DDLMD).

It belongs to the terpene synthase family. The cofactor is Mg(2+).

It localises to the plastid. Its subcellular location is the chloroplast. It catalyses the reaction (+)-copalyl diphosphate = miltiradiene + diphosphate. The catalysed reaction is (2E,6E,10E)-geranylgeranyl diphosphate = (+)-copalyl diphosphate. Its pathway is secondary metabolite biosynthesis; terpenoid biosynthesis. Functionally, bifunctional diterpene cyclase that catalyzes the successive two-step type-B (protonation-initiated cyclization) and type-A (ionization-initiated cyclization) reactions of geranylgeranyl diphosphate (GGDP) producing successively (+)-copalyl diphosphate and miltiradiene. This chain is Bifunctional diterpene synthase, chloroplastic (MDS), found in Selaginella moellendorffii (Spikemoss).